The chain runs to 538 residues: Syncytin-2 (538 aa).

The first 15 residues, 1-15 (MGLLLLVLILTPSLA), serve as a signal peptide directing secretion. Residues 16 to 478 (AYRHPDFPLL…GWLNWEGTWK (463 aa)) lie on the Extracellular side of the membrane. The short motif at 43–46 (CWLC) is the CXXC element. 3 disulfides stabilise this stretch: C43–C46, C43–C439, and C431–C438. 8 N-linked (GlcNAc...) asparagine glycosylation sites follow: N133, N146, N177, N220, N241, N247, N312, and N332. The tract at residues 354 to 374 (FIPLLAGLGILAGTGTGIAGI) is fusion peptide. Residues 414–430 (LQNRRGLDMLTAAQGGI) carry the CKS-17 motif. Residues 431 to 439 (CLALDEKCC) carry the CX6CC motif. N-linked (GlcNAc...) asparagine glycosylation is present at N443. A helical transmembrane segment spans residues 479 to 499 (WFSWVLPLTGPLVSLLLLLLF). Residues 500 to 538 (GPCLLNLITQFVSSRLQAIKLQTNLSAGRHPRNIQESPF) lie on the Cytoplasmic side of the membrane.

Belongs to the gamma type-C retroviral envelope protein family. HERV class-I FRD env subfamily. The surface and transmembrane proteins form a heterodimer. They are attached by non-covalent interactions or by a labile interchain disulfide bond. Post-translationally, specific enzymatic cleavages in vivo yield the mature SU and TM proteins. In terms of processing, the CXXC motif is highly conserved across a broad range of retroviral envelope proteins. It is thought to participate in the formation of a labile disulfide bond possibly with the CX6CC motif present in the transmembrane protein.

It localises to the virion. It is found in the cell membrane. Its function is as follows. This endogenous retroviral envelope protein has retained its original fusogenic properties and participates in trophoblast fusion and the formation of a syncytium during placenta morphogenesis. The interaction with MFSD2A is apparently important for this process. In terms of biological role, endogenous envelope proteins may have kept, lost or modified their original function during evolution but this one can still make pseudotypes with MLV, HIV-1 or SIV-1 virions and confer infectivity. Retroviral envelope proteins mediate receptor recognition and membrane fusion during early infection. The surface protein mediates receptor recognition, while the transmembrane protein anchors the envelope heterodimer to the viral membrane through one transmembrane domain. The other hydrophobic domain, called fusion peptide, mediates fusion of the viral membrane with the target cell membrane. In Pan troglodytes (Chimpanzee), this protein is Syncytin-2 (ERVFRD-1).